A 428-amino-acid polypeptide reads, in one-letter code: Enolase (428 aa).

Gln163 serves as a coordination point for (2R)-2-phosphoglycerate. The Proton donor role is filled by Glu205. Mg(2+)-binding residues include Asp242, Glu285, and Asp312. (2R)-2-phosphoglycerate contacts are provided by Lys337, Arg366, Ser367, and Lys388. Residue Lys337 is the Proton acceptor of the active site.

This sequence belongs to the enolase family. The cofactor is Mg(2+).

The protein resides in the cytoplasm. The protein localises to the secreted. It is found in the cell surface. The catalysed reaction is (2R)-2-phosphoglycerate = phosphoenolpyruvate + H2O. Its pathway is carbohydrate degradation; glycolysis; pyruvate from D-glyceraldehyde 3-phosphate: step 4/5. Catalyzes the reversible conversion of 2-phosphoglycerate (2-PG) into phosphoenolpyruvate (PEP). It is essential for the degradation of carbohydrates via glycolysis. This chain is Enolase, found in Brevibacillus brevis (strain 47 / JCM 6285 / NBRC 100599).